Here is a 389-residue protein sequence, read N- to C-terminus: Succinate--CoA ligase [ADP-forming] subunit beta (389 aa).

The region spanning 9–244 (KQLLAEYGIP…KTQEDETEVT (236 aa)) is the ATP-grasp domain. ATP is bound by residues Lys46, 53-55 (GRG), Gly102, and Glu107. Asn199 and Asp213 together coordinate Mg(2+). Substrate contacts are provided by residues Asn264 and 321-323 (GIV).

The protein belongs to the succinate/malate CoA ligase beta subunit family. As to quaternary structure, heterotetramer of two alpha and two beta subunits. The cofactor is Mg(2+).

It catalyses the reaction succinate + ATP + CoA = succinyl-CoA + ADP + phosphate. It carries out the reaction GTP + succinate + CoA = succinyl-CoA + GDP + phosphate. Its pathway is carbohydrate metabolism; tricarboxylic acid cycle; succinate from succinyl-CoA (ligase route): step 1/1. Functionally, succinyl-CoA synthetase functions in the citric acid cycle (TCA), coupling the hydrolysis of succinyl-CoA to the synthesis of either ATP or GTP and thus represents the only step of substrate-level phosphorylation in the TCA. The beta subunit provides nucleotide specificity of the enzyme and binds the substrate succinate, while the binding sites for coenzyme A and phosphate are found in the alpha subunit. This chain is Succinate--CoA ligase [ADP-forming] subunit beta, found in Xanthomonas oryzae pv. oryzae (strain MAFF 311018).